Reading from the N-terminus, the 81-residue chain is Sulfur carrier protein TusA (81 aa).

Cysteine 19 acts as the Cysteine persulfide intermediate in catalysis.

This sequence belongs to the sulfur carrier protein TusA family. In terms of assembly, interacts with IscS.

The protein resides in the cytoplasm. It participates in tRNA modification. Sulfur carrier protein involved in sulfur trafficking in the cell. Part of a sulfur-relay system required for 2-thiolation during synthesis of 2-thiouridine of the modified wobble base 5-methylaminomethyl-2-thiouridine (mnm(5)s(2)U) in tRNA. Interacts with IscS and stimulates its cysteine desulfurase activity. Accepts an activated sulfur from IscS, which is then transferred to TusD, and thus determines the direction of sulfur flow from IscS to 2-thiouridine formation. Also appears to be involved in sulfur transfer for the biosynthesis of molybdopterin. This chain is Sulfur carrier protein TusA, found in Cronobacter sakazakii (strain ATCC BAA-894) (Enterobacter sakazakii).